The sequence spans 989 residues: DEAD-box ATP-dependent RNA helicase 45 (989 aa).

2 stretches are compositionally biased toward basic and acidic residues: residues 1 to 39 and 64 to 101; these read MLEKSKSRKENDRKDRDRSKKENGRRDTTEMRSRVKRCD and RDSKRRGEDKGRGRRERDRDRGKYLKRDRERREREKEK. Disordered stretches follow at residues 1–248 and 305–330; these read MLEK…AADE and QGEDSDSDYSEPKSDDDPSLDEDDEE. Positions 88–182 form a coiled coil; sequence LKRDRERRER…ELKRQNEEAQ (95 aa). The residue at position 119 (serine 119) is a Phosphoserine. Positions 134–179 are enriched in basic and acidic residues; it reads SRHGDDDVEKKTRDEQVEDEQKQLAEEVEKRRRRVQEWQELKRQNE. A Phosphoserine modification is found at serine 200. Positions 203 to 222 are enriched in basic and acidic residues; sequence EVKSDSEMDVDRDTKLENGG. Residues 230–239 show a composition bias toward polar residues; the sequence is ENETAVTVSE. Residues 321–330 are compositionally biased toward acidic residues; sequence DPSLDEDDEE. Residues 396–424 carry the Q motif motif; the sequence is QFWHQTGLTSKILDTLKKLNYEKPMPIQA. Positions 427-605 constitute a Helicase ATP-binding domain; sequence LPIIMSGRDC…RKVLNKPVEI (179 aa). Position 440 to 447 (440 to 447) interacts with ATP; it reads AKTGSGKT. The short motif at 553–556 is the DEAD box element; the sequence is DEAD. One can recognise a Helicase C-terminal domain in the interval 590–748; sequence QVETLARKVL…PVPDDVKAVA (159 aa).

Belongs to the DEAD box helicase family. DDX46/PRP5 subfamily.

It catalyses the reaction ATP + H2O = ADP + phosphate + H(+). The protein is DEAD-box ATP-dependent RNA helicase 45 (RH45) of Arabidopsis thaliana (Mouse-ear cress).